A 736-amino-acid polypeptide reads, in one-letter code: Melanotransferrin (736 aa).

An N-terminal signal peptide occupies residues 1–19; the sequence is MRCRSAAMWIFLALRTALG. 2 consecutive Transferrin-like domains span residues 23 to 357 and 366 to 706; these read VRWC…GLLC and LRWC…GMQS. Cystine bridges form between Cys26–Cys63 and Cys36–Cys54. 2 residues coordinate Fe(3+): Asp78 and Tyr107. Asn118 carries N-linked (GlcNAc...) asparagine glycosylation. 4 disulfides stabilise this stretch: Cys130–Cys216, Cys172–Cys189, Cys186–Cys199, and Cys257–Cys271. Hydrogencarbonate is bound at residue Thr132. N-linked (GlcNAc...) asparagine glycosylation occurs at Asn135. Hydrogencarbonate contacts are provided by Arg136, Val138, and Gly139. Tyr210 provides a ligand contact to Fe(3+). Fe(3+) is bound by residues His279 and Tyr451. Residue Asn515 is glycosylated (N-linked (GlcNAc...) asparagine). Residue His625 coordinates Fe(3+). Gly711 is lipidated: GPI-anchor amidated glycine. A propeptide spans 712-736 (removed in mature form); sequence AAVGAPGASLLPLLPLAVGLLLSSL.

It belongs to the transferrin family.

It is found in the cell membrane. Involved in iron cellular uptake. Seems to be internalized and then recycled back to the cell membrane. Binds a single atom of iron per subunit. Could also bind zinc. The protein is Melanotransferrin of Oryctolagus cuniculus (Rabbit).